The primary structure comprises 300 residues: N-acetylmuramic acid 6-phosphate etherase (300 aa).

The region spanning 57–220 (IAVAFQCGGR…TTGAMIRTGK (164 aa)) is the SIS domain. The active-site Proton donor is the Glu85. Residue Glu116 is part of the active site.

It belongs to the GCKR-like family. MurNAc-6-P etherase subfamily. Homodimer.

It catalyses the reaction N-acetyl-D-muramate 6-phosphate + H2O = N-acetyl-D-glucosamine 6-phosphate + (R)-lactate. Its pathway is amino-sugar metabolism; 1,6-anhydro-N-acetylmuramate degradation. It participates in amino-sugar metabolism; N-acetylmuramate degradation. It functions in the pathway cell wall biogenesis; peptidoglycan recycling. Its function is as follows. Specifically catalyzes the cleavage of the D-lactyl ether substituent of MurNAc 6-phosphate, producing GlcNAc 6-phosphate and D-lactate. Together with AnmK, is also required for the utilization of anhydro-N-acetylmuramic acid (anhMurNAc) either imported from the medium or derived from its own cell wall murein, and thus plays a role in cell wall recycling. This Aliivibrio salmonicida (strain LFI1238) (Vibrio salmonicida (strain LFI1238)) protein is N-acetylmuramic acid 6-phosphate etherase.